The following is a 351-amino-acid chain: Photosystem II D2 protein (351 aa).

The chain crosses the membrane as a helical span at residues 39-59 (CSYLALGGWLTGTTFVTSWYT). Residue His-116 participates in chlorophyll a binding. A helical membrane pass occupies residues 123 to 139 (GFCLRQFEIARLVGIRP). Residues Gln-128 and Asn-141 each coordinate pheophytin a. The chain crosses the membrane as a helical span at residues 151–164 (VFVSVFLMYPLGQA). His-196 serves as a coordination point for chlorophyll a. A helical membrane pass occupies residues 206 to 226 (GALLCAIHGATVQNTLFEDGD). His-213 and Phe-260 together coordinate a plastoquinone. His-213 provides a ligand contact to Fe cation. Residue His-267 coordinates Fe cation. Residues 277–293 (GLWTSAFGIVGLALNLR) traverse the membrane as a helical segment.

This sequence belongs to the reaction center PufL/M/PsbA/D family. In terms of assembly, PSII is composed of 1 copy each of membrane proteins PsbA, PsbB, PsbC, PsbD, PsbE, PsbF, PsbH, PsbI, PsbJ, PsbK, PsbL, PsbM, PsbT, PsbX, PsbY, PsbZ, Psb30/Ycf12, at least 3 peripheral proteins of the oxygen-evolving complex and a large number of cofactors. It forms dimeric complexes. Requires The D1/D2 heterodimer binds P680, chlorophylls that are the primary electron donor of PSII, and subsequent electron acceptors. It shares a non-heme iron and each subunit binds pheophytin, quinone, additional chlorophylls, carotenoids and lipids. There is also a Cl(-1) ion associated with D1 and D2, which is required for oxygen evolution. The PSII complex binds additional chlorophylls, carotenoids and specific lipids. as cofactor.

The protein localises to the plastid. It localises to the chloroplast thylakoid membrane. It carries out the reaction 2 a plastoquinone + 4 hnu + 2 H2O = 2 a plastoquinol + O2. In terms of biological role, photosystem II (PSII) is a light-driven water:plastoquinone oxidoreductase that uses light energy to abstract electrons from H(2)O, generating O(2) and a proton gradient subsequently used for ATP formation. It consists of a core antenna complex that captures photons, and an electron transfer chain that converts photonic excitation into a charge separation. The D1/D2 (PsbA/PsbD) reaction center heterodimer binds P680, the primary electron donor of PSII as well as several subsequent electron acceptors. D2 is needed for assembly of a stable PSII complex. This is Photosystem II D2 protein from Gracilaria tenuistipitata var. liui (Red alga).